A 198-amino-acid chain; its full sequence is MIKKSAAILAGGKSSRMNYRNKAFLKYEEDYFIERIIKALEDYEEIIIISNNPGEYKEFGLKVFKDIYPGQGPLSGIHSALNHIKNDYCLVVACDMPFINKDVVNYLGNIKEDYEILIPKFQERLQPLCAIYKKSCKDIMEKELINNSNKLIKTCFKFSMKVVEEFPFIEKVHKKEIKNFYNINTVDEYEDLIKKKEI.

GTP is bound by residues 9-11, lysine 22, aspartate 66, and aspartate 95; that span reads LAG. Aspartate 95 is a binding site for Mg(2+).

This sequence belongs to the MobA family. Mg(2+) serves as cofactor.

It localises to the cytoplasm. The catalysed reaction is Mo-molybdopterin + GTP + H(+) = Mo-molybdopterin guanine dinucleotide + diphosphate. In terms of biological role, transfers a GMP moiety from GTP to Mo-molybdopterin (Mo-MPT) cofactor (Moco or molybdenum cofactor) to form Mo-molybdopterin guanine dinucleotide (Mo-MGD) cofactor. The sequence is that of Probable molybdenum cofactor guanylyltransferase from Clostridium perfringens (strain ATCC 13124 / DSM 756 / JCM 1290 / NCIMB 6125 / NCTC 8237 / Type A).